Here is a 169-residue protein sequence, read N- to C-terminus: Large ribosomal subunit protein uL10 (169 aa).

It belongs to the universal ribosomal protein uL10 family. As to quaternary structure, part of the ribosomal stalk of the 50S ribosomal subunit. The N-terminus interacts with L11 and the large rRNA to form the base of the stalk. The C-terminus forms an elongated spine to which L12 dimers bind in a sequential fashion forming a multimeric L10(L12)X complex.

Functionally, forms part of the ribosomal stalk, playing a central role in the interaction of the ribosome with GTP-bound translation factors. The polypeptide is Large ribosomal subunit protein uL10 (Onion yellows phytoplasma (strain OY-M)).